The sequence spans 341 residues: Uroporphyrinogen decarboxylase (341 aa).

Residues 23 to 27 (RQAGR), Asp-73, Tyr-148, Ser-203, and His-318 each bind substrate.

The protein belongs to the uroporphyrinogen decarboxylase family. In terms of assembly, homodimer.

It is found in the cytoplasm. The catalysed reaction is uroporphyrinogen III + 4 H(+) = coproporphyrinogen III + 4 CO2. Its pathway is porphyrin-containing compound metabolism; protoporphyrin-IX biosynthesis; coproporphyrinogen-III from 5-aminolevulinate: step 4/4. Catalyzes the decarboxylation of four acetate groups of uroporphyrinogen-III to yield coproporphyrinogen-III. This is Uroporphyrinogen decarboxylase from Brucella ovis (strain ATCC 25840 / 63/290 / NCTC 10512).